Consider the following 152-residue polypeptide: Transcriptional regulator MraZ (152 aa).

2 SpoVT-AbrB domains span residues 5-51 (VNSI…PLPE) and 80-123 (AAEC…DEVL).

Belongs to the MraZ family. In terms of assembly, forms oligomers.

The protein resides in the cytoplasm. It localises to the nucleoid. In Methylococcus capsulatus (strain ATCC 33009 / NCIMB 11132 / Bath), this protein is Transcriptional regulator MraZ.